The primary structure comprises 68 residues: Large ribosomal subunit protein uL29 (68 aa).

The protein belongs to the universal ribosomal protein uL29 family.

The chain is Large ribosomal subunit protein uL29 from Rhodospirillum rubrum (strain ATCC 11170 / ATH 1.1.1 / DSM 467 / LMG 4362 / NCIMB 8255 / S1).